Consider the following 385-residue polypeptide: WD repeat-containing protein 74 (385 aa).

WD repeat units follow at residues 40–80 (RREE…FQGQ), 83–122 (CPGG…ASSD), 128–168 (RVGP…EPLF), 179–220 (DLRV…RRPV), 224–266 (TYGE…GCLK), and 267–306 (GLAG…GLEH). S214 carries the post-translational modification Phosphoserine. N6-methyllysine is present on K311. Residues 320–385 (SGRDNWEDEP…KKKRPGSTSS (66 aa)) form a required for nucleolar and nuclear location region. Positions 323 to 385 (DNWEDEPQEP…KKKRPGSTSS (63 aa)) are disordered. Positions 372–385 (ARRRKKKRPGSTSS) are enriched in basic residues.

Isoform 1 interacts (through WDR repeats) with NVL; the interaction is independent of RNA or pre-60S ribosome particles. Isoform 2 does not interact with NVL. Interacts with MTREX; the interaction dissociation in a late stage of rRNA synthesis is required for appropriate maturation of pre-60S particles and depends on the ATPase activity of NVL.

The protein resides in the nucleus. It localises to the nucleolus. Its function is as follows. Regulatory protein of the MTREX-exosome complex involved in the synthesis of the 60S ribosomal subunit. Participates in an early cleavage of the pre-rRNA processing pathway in cooperation with NVL. This is WD repeat-containing protein 74 (WDR74) from Bos taurus (Bovine).